The following is a 117-amino-acid chain: MTVNIYDNANEMANILTETQQYIAWQNAFNAIQNDTDSKALFGEFQEIQMAVQQMMQSQQQPKPEQEKEWDAVAAKVQKDEKINALMEAEQALNTLLTELNDIVTKPVAEAYSKLQK.

The protein belongs to the UPF0342 family.

This is UPF0342 protein LEUM_1212 from Leuconostoc mesenteroides subsp. mesenteroides (strain ATCC 8293 / DSM 20343 / BCRC 11652 / CCM 1803 / JCM 6124 / NCDO 523 / NBRC 100496 / NCIMB 8023 / NCTC 12954 / NRRL B-1118 / 37Y).